A 662-amino-acid chain; its full sequence is Probable quinol oxidase subunit 1 (662 aa).

Transmembrane regions (helical) follow at residues 14–34 and 58–78; these read WMIT…IAVI and IMYL…ALLI. His-102 contributes to the Fe(II)-heme a binding site. 8 consecutive transmembrane segments (helical) span residues 103–123, 140–160, 187–207, 228–248, 273–293, 311–331, 336–356, and 376–396; these read GVIM…NIVV, VSFW…IIGG, IAIQ…FVTI, FITT…LALM, FFWV…FGIY, MVWA…HHFF, GALI…PTGV, and MLFS…GVML. Cu cation-binding residues include His-279, Tyr-283, His-328, and His-329. The segment at residues 279-283 is a cross-link (1'-histidyl-3'-tyrosine (His-Tyr)); that stretch reads HPEVY. His-414 contacts heme a3. The next 5 membrane-spanning stretches (helical) occupy residues 415–435, 451–471, 493–513, 587–604, and 608–627; these read FHYT…IFWY, CFWF…ILGL, ISTI…VSIV, PVGF…FFLI, and VIPA…YRSF. His-416 is a binding site for Fe(II)-heme a.

Belongs to the heme-copper respiratory oxidase family. It depends on Cu cation as a cofactor. Ferriheme a serves as cofactor. Requires Heme A3. as cofactor.

It is found in the cell membrane. It carries out the reaction 2 a quinol + O2 = 2 a quinone + 2 H2O. Its pathway is energy metabolism; oxidative phosphorylation. Functionally, catalyzes quinol oxidation with the concomitant reduction of oxygen to water. This chain is Probable quinol oxidase subunit 1 (qoxB), found in Staphylococcus aureus (strain USA300).